Reading from the N-terminus, the 400-residue chain is Zinc finger CCHC domain-containing protein 3 (400 aa).

Positions 1–157 (MATGGGAEEE…LQDEPPAAGP (157 aa)) are disordered. Basic and acidic residues-rich tracts occupy residues 26–38 (ARVE…REKM) and 47–63 (LAEK…RDET). The segment covering 66–75 (GASGGLGSPG) has biased composition (gly residues). A compositionally biased stretch (basic and acidic residues) spans 91-109 (GDPKGRRRDPTGEASDAYR). A Phosphotyrosine modification is found at Y198. 2 consecutive CCHC-type zinc fingers follow at residues 349 to 365 (RCFR…YCRK) and 369 to 384 (CNLC…QCPK).

In terms of assembly, interacts with CGAS. Interacts with RIGI. Interacts with IFIH1/MDA5.

Its subcellular location is the cytoplasm. In terms of biological role, nucleic acid-binding protein involved in innate immune response to DNA and RNA viruses. Binds DNA and RNA in the cytoplasm and acts by promoting recognition of viral nucleic acids by virus sensors, such as RIGI, IFIH1/MDA5 and CGAS. Acts as a co-sensor for recognition of double-stranded DNA (dsDNA) by cGAS in the cytoplasm, thereby playing a role in innate immune response to cytosolic dsDNA and DNA virus. Binds dsDNA and probably acts by promoting sensing of dsDNA by CGAS, leading to enhance CGAS oligomerization and activation. Promotes sensing of viral RNA by RIG-I-like receptors proteins RIGI and IFIH1/MDA5 via two mechanisms: binds double-stranded RNA (dsRNA), enhancing the binding of RIGI and IFIH1/MDA5 to dsRNA and promotes 'Lys-63'-linked ubiquitination and subsequent activation of RIGI and IFIH1/MDA5. This chain is Zinc finger CCHC domain-containing protein 3, found in Mus musculus (Mouse).